The sequence spans 272 residues: tRNA (guanine-N(7)-)-methyltransferase (272 aa).

Residues 1–20 are compositionally biased toward basic and acidic residues; it reads MSTDSESKRRAYREEKEGAR. The disordered stretch occupies residues 1–43; that stretch reads MSTDSESKRRAYREEKEGARKKSVKLAPEATPESKPDLPRKRY. Residues G89, 112 to 113, 148 to 149, and C168 contribute to the S-adenosyl-L-methionine site; these read EI and NA. Residue D171 is part of the active site. 246 to 248 is an S-adenosyl-L-methionine binding site; the sequence is TEE.

Belongs to the class I-like SAM-binding methyltransferase superfamily. TrmB family. In terms of assembly, forms a complex with TRM82.

The protein localises to the nucleus. The catalysed reaction is guanosine(46) in tRNA + S-adenosyl-L-methionine = N(7)-methylguanosine(46) in tRNA + S-adenosyl-L-homocysteine. The protein operates within tRNA modification; N(7)-methylguanine-tRNA biosynthesis. Catalyzes the formation of N(7)-methylguanine at position 46 (m7G46) in tRNA. The sequence is that of tRNA (guanine-N(7)-)-methyltransferase from Meyerozyma guilliermondii (strain ATCC 6260 / CBS 566 / DSM 6381 / JCM 1539 / NBRC 10279 / NRRL Y-324) (Yeast).